We begin with the raw amino-acid sequence, 497 residues long: Anthranilate synthase component 1 (497 aa).

Residues serine 49 and 271-273 (PYL) contribute to the L-tryptophan site. Chorismate is bound at residue 312 to 313 (GT). Glutamate 339 is a Mg(2+) binding site. Chorismate contacts are provided by residues arginine 447, 461 to 463 (GAG), and glycine 463. Position 476 (glutamate 476) interacts with Mg(2+).

Belongs to the anthranilate synthase component I family. In terms of assembly, heterotetramer consisting of two non-identical subunits: a beta subunit (TrpG) and a large alpha subunit (TrpE). Requires Mg(2+) as cofactor.

The enzyme catalyses chorismate + L-glutamine = anthranilate + pyruvate + L-glutamate + H(+). Its pathway is amino-acid biosynthesis; L-tryptophan biosynthesis; L-tryptophan from chorismate: step 1/5. Feedback inhibited by tryptophan. Functionally, part of a heterotetrameric complex that catalyzes the two-step biosynthesis of anthranilate, an intermediate in the biosynthesis of L-tryptophan. In the first step, the glutamine-binding beta subunit (TrpG) of anthranilate synthase (AS) provides the glutamine amidotransferase activity which generates ammonia as a substrate that, along with chorismate, is used in the second step, catalyzed by the large alpha subunit of AS (TrpE) to produce anthranilate. In the absence of TrpG, TrpE can synthesize anthranilate directly from chorismate and high concentrations of ammonia. In Acinetobacter calcoaceticus, this protein is Anthranilate synthase component 1 (trpE).